Here is a 219-residue protein sequence, read N- to C-terminus: NADH-ubiquinone oxidoreductase 23 kDa subunit, mitochondrial (219 aa).

4Fe-4S ferredoxin-type domains follow at residues 111–140 (RRYP…IEAE) and 150–179 (TRYD…ESPN). Positions 120, 123, 126, 130, 159, 162, 165, and 169 each coordinate [4Fe-4S] cluster.

It belongs to the complex I 23 kDa subunit family. In terms of assembly, complex I is composed of about 40 different subunits. [4Fe-4S] cluster is required as a cofactor.

The protein resides in the mitochondrion. The enzyme catalyses a ubiquinone + NADH + 5 H(+)(in) = a ubiquinol + NAD(+) + 4 H(+)(out). Functionally, core subunit of the mitochondrial membrane respiratory chain NADH dehydrogenase (Complex I) that is believed to belong to the minimal assembly required for catalysis. Complex I functions in the transfer of electrons from NADH to the respiratory chain. The immediate electron acceptor for the enzyme is believed to be ubiquinone. May donate electrons to ubiquinone. This chain is NADH-ubiquinone oxidoreductase 23 kDa subunit, mitochondrial (nuo21.3c), found in Neurospora crassa (strain ATCC 24698 / 74-OR23-1A / CBS 708.71 / DSM 1257 / FGSC 987).